The following is a 372-amino-acid chain: Fatty acid 2-hydroxylase (372 aa).

The Cytochrome b5 heme-binding domain maps to 8–86 (AASFSPSEVQ…LEQYYVGELR (79 aa)). Heme contacts are provided by His43 and His69. A run of 2 helical transmembrane segments spans residues 168–188 (VWYS…WSYY) and 213–233 (SMFP…EYLI). The Fatty acid hydroxylase domain occupies 219–361 (FMLGTFLWSL…TKLWDYCFHT (143 aa)). The Zn(2+) site is built by His234, His239, His257, His260, and His261. Helical transmembrane passes span 268 to 288 (SRLV…YLCM) and 290 to 310 (LILP…GYVL). Positions 315, 319, 336, 339, and 340 each coordinate Zn(2+).

Belongs to the sterol desaturase family. SCS7 subfamily. Zn(2+) serves as cofactor. In terms of tissue distribution, detected in differentiating cultured keratinocytes (at protein level). Detected in epidermis and cultured keratinocytes. Highly expressed in brain and colon. Detected at lower levels in testis, prostate, pancreas and kidney.

The protein resides in the endoplasmic reticulum membrane. It localises to the microsome membrane. The enzyme catalyses a 1,2-saturated fatty acid + 2 Fe(II)-[cytochrome b5] + O2 + 2 H(+) = a (R)-2-hydroxy fatty acid + 2 Fe(III)-[cytochrome b5] + H2O. It catalyses the reaction hexadecanoate + 2 Fe(II)-[cytochrome b5] + O2 + 2 H(+) = (R)-2-hydroxyhexadecanoate + 2 Fe(III)-[cytochrome b5] + H2O. The catalysed reaction is octadecanoate + 2 Fe(II)-[cytochrome b5] + O2 + 2 H(+) = (R)-2-hydroxyoctadecanoate + 2 Fe(III)-[cytochrome b5] + H2O. It carries out the reaction docosanoate + 2 Fe(II)-[cytochrome b5] + O2 + 2 H(+) = 2-hydroxydocosanoate + 2 Fe(III)-[cytochrome b5] + H2O. The enzyme catalyses tetracosanoate + 2 Fe(II)-[cytochrome b5] + O2 + 2 H(+) = (R)-2-hydroxytetracosanoate + 2 Fe(III)-[cytochrome b5] + H2O. The protein operates within lipid metabolism; fatty acid metabolism. Its pathway is sphingolipid metabolism; galactosylceramide biosynthesis. Catalyzes the hydroxylation of free fatty acids at the C-2 position to produce 2-hydroxy fatty acids, which are building blocks of sphingolipids and glycosphingolipids common in neural tissue and epidermis. FA2H is stereospecific for the production of (R)-2-hydroxy fatty acids. Plays an essential role in the synthesis of galactosphingolipids of the myelin sheath. Responsible for the synthesis of sphingolipids and glycosphingolipids involved in the formation of epidermal lamellar bodies critical for skin permeability barrier. Participates in the synthesis of glycosphingolipids and a fraction of type II wax diesters in sebaceous gland, specifically regulating hair follicle homeostasis. Involved in the synthesis of sphingolipids of plasma membrane rafts, controlling lipid raft mobility and trafficking of raft-associated proteins. The chain is Fatty acid 2-hydroxylase from Homo sapiens (Human).